The sequence spans 355 residues: Elongation factor Ts (355 aa).

Positions 82 to 85 are involved in Mg(2+) ion dislocation from EF-Tu; sequence TDFV.

This sequence belongs to the EF-Ts family.

The protein localises to the cytoplasm. Functionally, associates with the EF-Tu.GDP complex and induces the exchange of GDP to GTP. It remains bound to the aminoacyl-tRNA.EF-Tu.GTP complex up to the GTP hydrolysis stage on the ribosome. The sequence is that of Elongation factor Ts (tsf) from Helicobacter pylori (strain ATCC 700392 / 26695) (Campylobacter pylori).